Here is a 466-residue protein sequence, read N- to C-terminus: Adenosylhomocysteinase (466 aa).

3 residues coordinate substrate: Thr57, Asp132, and Glu192. Residue Thr193–Thr195 coordinates NAD(+). Substrate-binding residues include Lys222 and Asp226. NAD(+) contacts are provided by residues Asn227, Gly256 to Gly261, Glu279, Asn314, Ile335 to His337, and Asn380.

The protein belongs to the adenosylhomocysteinase family. It depends on NAD(+) as a cofactor.

The protein localises to the cytoplasm. The enzyme catalyses S-adenosyl-L-homocysteine + H2O = L-homocysteine + adenosine. It functions in the pathway amino-acid biosynthesis; L-homocysteine biosynthesis; L-homocysteine from S-adenosyl-L-homocysteine: step 1/1. Functionally, may play a key role in the regulation of the intracellular concentration of adenosylhomocysteine. The polypeptide is Adenosylhomocysteinase (Sinorhizobium medicae (strain WSM419) (Ensifer medicae)).